The chain runs to 741 residues: Linoleate 9S-lipoxygenase (741 aa).

Residues 1–53 (IPGAFYIKNFMQVEFYLKSLTLEDIPNHGTIHFICNSWIYNSKVYKSDRIFFA) form the PLAT domain. Positions 56 to 741 (TYLPSETPAP…SEEGLTFRGI (686 aa)) constitute a Lipoxygenase domain. Positions 108–144 (ALARPVLGGSTLPYPRRGRTGRPKTKKDPNSEKPSDF) are disordered. The segment covering 123–132 (RRGRTGRPKT) has biased composition (basic residues). Positions 133–144 (KKDPNSEKPSDF) are enriched in basic and acidic residues. Fe cation-binding residues include His407, His412, His598, and Asn602.

The protein belongs to the lipoxygenase family. As to quaternary structure, monomer. The cofactor is Fe cation.

It localises to the cytoplasm. It catalyses the reaction (9Z,12Z)-octadecadienoate + O2 = (9S)-hydroperoxy-(10E,12Z)-octadecadienoate. The catalysed reaction is (9Z,12Z)-octadecadienoate + O2 = (13S)-hydroperoxy-(9Z,11E)-octadecadienoate. It carries out the reaction (9Z,12Z,15Z)-octadecatrienoate + O2 = (13S)-hydroperoxy-(9Z,11E,15Z)-octadecatrienoate. It participates in lipid metabolism; oxylipin biosynthesis. Its function is as follows. Plant lipoxygenase may be involved in a number of diverse aspects of plant physiology including growth and development, pest resistance, and senescence or responses to wounding. It catalyzes the hydroperoxidation of lipids containing a cis,cis-1,4-pentadiene structure. This chain is Linoleate 9S-lipoxygenase, found in Phaseolus vulgaris (Kidney bean).